Reading from the N-terminus, the 548-residue chain is CTP synthase (548 aa).

Positions 1-270 are amidoligase domain; the sequence is MNRRSCAFIF…DTKISALLGC (270 aa). CTP is bound at residue Ser17. Residue Ser17 coordinates UTP. Residues 18-23 and Asp75 contribute to the ATP site; that span reads SIGKGL. Mg(2+) is bound by residues Asp75 and Glu143. CTP-binding positions include 150–152, 190–195, and Lys227; these read DIE and KTKPSQ. UTP contacts are provided by residues 190-195 and Lys227; that span reads KTKPSQ. Residues 305–548 enclose the Glutamine amidotransferase type-1 domain; it reads YSGLCDAYIS…VRAGLLRKYS (244 aa). Gly356 provides a ligand contact to L-glutamine. The active-site Nucleophile; for glutamine hydrolysis is Cys383. L-glutamine contacts are provided by residues 384 to 387, Glu407, and Arg475; that span reads FGFQ. Residues His521 and Glu523 contribute to the active site.

Belongs to the CTP synthase family. As to quaternary structure, homotetramer.

The enzyme catalyses UTP + L-glutamine + ATP + H2O = CTP + L-glutamate + ADP + phosphate + 2 H(+). It catalyses the reaction L-glutamine + H2O = L-glutamate + NH4(+). It carries out the reaction UTP + NH4(+) + ATP = CTP + ADP + phosphate + 2 H(+). It participates in pyrimidine metabolism; CTP biosynthesis via de novo pathway; CTP from UDP: step 2/2. Allosterically activated by GTP, when glutamine is the substrate; GTP has no effect on the reaction when ammonia is the substrate. The allosteric effector GTP functions by stabilizing the protein conformation that binds the tetrahedral intermediate(s) formed during glutamine hydrolysis. Inhibited by the product CTP, via allosteric rather than competitive inhibition. Its function is as follows. Catalyzes the ATP-dependent amination of UTP to CTP with either L-glutamine or ammonia as the source of nitrogen. Regulates intracellular CTP levels through interactions with the four ribonucleotide triphosphates. In Neorickettsia sennetsu (strain ATCC VR-367 / Miyayama) (Ehrlichia sennetsu), this protein is CTP synthase.